Consider the following 131-residue polypeptide: Interleukin-13 (131 aa).

The signal sequence occupies residues 1-18 (MALWVTAVLALACLGGLA). Residues asparagine 42, asparagine 53, asparagine 76, and asparagine 121 are each glycosylated (N-linked (GlcNAc...) asparagine). Cystine bridges form between cysteine 52–cysteine 80 and cysteine 68–cysteine 94.

The protein belongs to the IL-4/IL-13 family. As to quaternary structure, interacts with IL13RA2.

Its subcellular location is the secreted. In terms of biological role, cytokine that plays important roles in allergic inflammation and immune response to parasite infection. Synergizes with IL2 in regulating interferon-gamma synthesis. Stimulates B-cell proliferation, and activation of eosinophils, basophils, and mast cells. Plays an important role in controlling IL33 activity by modulating the production of transmembrane and soluble forms of interleukin-1 receptor-like 1/IL1RL1. Displays the capacity to antagonize Th1-driven proinflammatory immune response and downregulates synthesis of many proinflammatory cytokines including IL1, IL6, IL10, IL12 and TNF-alpha through a mechanism that partially involves suppression of NF-kappa-B. Also functions on nonhematopoietic cells, including endothelial cells where it induces vascular cell adhesion protein 1/VCAM1, which is important in the recruitment of eosinophils. Exerts its biological effects through its receptors which comprises the IL4R chain and the IL13RA1 chain, to activate JAK1 and TYK2, leading to the activation of STAT6. Aside from IL13RA1, another receptor IL13RA2 acts as a high affinity decoy for IL13 and mediates internalization and depletion of extracellular IL13. In Rattus norvegicus (Rat), this protein is Interleukin-13 (Il13).